Here is a 73-residue protein sequence, read N- to C-terminus: Large ribosomal subunit protein bL31 (73 aa).

Zn(2+)-binding residues include C16, C18, C37, and C40.

Belongs to the bacterial ribosomal protein bL31 family. Type A subfamily. As to quaternary structure, part of the 50S ribosomal subunit. Zn(2+) is required as a cofactor.

Its function is as follows. Binds the 23S rRNA. The polypeptide is Large ribosomal subunit protein bL31 (Pseudomonas savastanoi pv. phaseolicola (strain 1448A / Race 6) (Pseudomonas syringae pv. phaseolicola (strain 1448A / Race 6))).